The primary structure comprises 98 residues: NADH-ubiquinone oxidoreductase chain 4L (98 aa).

3 helical membrane passes run 1–21, 29–49, and 61–81; these read MTLI…GLLM, ALLC…LTIL, and IILL…LVMV.

The protein belongs to the complex I subunit 4L family. In terms of assembly, core subunit of respiratory chain NADH dehydrogenase (Complex I) which is composed of 45 different subunits.

It is found in the mitochondrion inner membrane. The catalysed reaction is a ubiquinone + NADH + 5 H(+)(in) = a ubiquinol + NAD(+) + 4 H(+)(out). Functionally, core subunit of the mitochondrial membrane respiratory chain NADH dehydrogenase (Complex I) which catalyzes electron transfer from NADH through the respiratory chain, using ubiquinone as an electron acceptor. Part of the enzyme membrane arm which is embedded in the lipid bilayer and involved in proton translocation. In Balaenoptera borealis (Sei whale), this protein is NADH-ubiquinone oxidoreductase chain 4L (MT-ND4L).